The following is a 217-amino-acid chain: uncharacterized protein (217 aa).

The ABC transporter domain occupies 14-217; the sequence is LAVNNLCIER…NELATEIISL (204 aa). Residue 46-53 coordinates ATP; sequence GEIGSGKT.

It belongs to the ABC transporter superfamily.

This is an uncharacterized protein from Haemophilus influenzae (strain ATCC 51907 / DSM 11121 / KW20 / Rd).